The chain runs to 179 residues: Large ribosomal subunit protein uL5 (179 aa).

The protein belongs to the universal ribosomal protein uL5 family. In terms of assembly, part of the 50S ribosomal subunit; part of the 5S rRNA/L5/L18/L25 subcomplex. Contacts the 5S rRNA and the P site tRNA. Forms a bridge to the 30S subunit in the 70S ribosome.

Its function is as follows. This is one of the proteins that bind and probably mediate the attachment of the 5S RNA into the large ribosomal subunit, where it forms part of the central protuberance. In the 70S ribosome it contacts protein S13 of the 30S subunit (bridge B1b), connecting the 2 subunits; this bridge is implicated in subunit movement. Contacts the P site tRNA; the 5S rRNA and some of its associated proteins might help stabilize positioning of ribosome-bound tRNAs. In Nitratidesulfovibrio vulgaris (strain DSM 19637 / Miyazaki F) (Desulfovibrio vulgaris), this protein is Large ribosomal subunit protein uL5.